A 137-amino-acid polypeptide reads, in one-letter code: Putative pre-16S rRNA nuclease (137 aa).

It belongs to the YqgF nuclease family.

It localises to the cytoplasm. In terms of biological role, could be a nuclease involved in processing of the 5'-end of pre-16S rRNA. The polypeptide is Putative pre-16S rRNA nuclease (Bacillus cereus (strain G9842)).